We begin with the raw amino-acid sequence, 211 residues long: Glycerol-3-phosphate acyltransferase 2 (211 aa).

5 helical membrane-spanning segments follow: residues 6-26 (FASL…VVVG), 57-77 (IIVF…PVIF), 82-102 (HYLC…PIFL), 124-144 (FFLI…MVSL), and 148-168 (ISVV…LSII).

Belongs to the PlsY family. As to quaternary structure, probably interacts with PlsX.

It localises to the cell membrane. It catalyses the reaction an acyl phosphate + sn-glycerol 3-phosphate = a 1-acyl-sn-glycero-3-phosphate + phosphate. It functions in the pathway lipid metabolism; phospholipid metabolism. Catalyzes the transfer of an acyl group from acyl-phosphate (acyl-PO(4)) to glycerol-3-phosphate (G3P) to form lysophosphatidic acid (LPA). This enzyme utilizes acyl-phosphate as fatty acyl donor, but not acyl-CoA or acyl-ACP. This is Glycerol-3-phosphate acyltransferase 2 from Lactobacillus acidophilus (strain ATCC 700396 / NCK56 / N2 / NCFM).